Consider the following 932-residue polypeptide: MQTATKPLVGARAVPLSRRASFLVAEARRKPSTNARRTRVGSTSTTTTTTTILTDVNGPALTTVAKPGHQYDLKQTVEMKATVSVHMKSFWWSDEKKERARDWAYDLILGSWLTLELVSSELDPKTGQEHDVISGKLKHSRETEKDYDLYEAIFTCRHRLAPSGAVRLVNYHHTEMLLGEVKIFPAGEDPTKSSAVTLFHCQSWIDPSHCSPDKRTFFPVEKSYIPSQTPKGVEKLRKSELEALRGNGCGERKKHDRIYDYDVYNDLGKPESKRPVLGGKEHPYPRRCRTGRPRSKTDPSSEEESHKKGEMYVPRDETFTERKEQAFLTKQLLSQLHGLCTGLKVNKDILPSFPTLASIDALYDDDFRNQPVQPEGGKVRLILDLLAKELVHLVKLEGAEFVEGIRRVFKFETPEIHDMDKLAWFRDEEFARQTLAGMNPLSIQLVTELPIVSKLDELKYGPADSLITKELIEKQINRIMTAEEAVAQKKLFMLDYHDLLLPYVHRVRKLDNKTMYGSRTLFFLADDGTLRPIAIELTRPKSPHKQQWRKVFTPGSGYSGSVTGSWEWQLAKIHVLSHDTGYHQLVSHWLRTHCCVEPYVIAANRQLSQMHPIYRLLHPHFRFTMEINAQARGMLICADGIIEKTFSPGEFSMEISSAAYDKQWRFDMEALPEDLIRRGMAVRGEDGKLELAIEDYPYANDGLLVWDAIKQWASDYVAHYYPCAVDIVDDEELQDWWTEVRTKGHPDKQDEPWWPELDCHESLVQVLATIMWVTSAHHAAVNFGQYPMAGYVPNHPSIARRNMPCEMGPEEMLAFKAAPEKVWLDTLPSQLQTVMVMATLDLLSSHASDEEYMGTHQEPAWQRDGEVDKAFQVFQKKMRDIAEQVEEWNKDDSRRNRHGAGVVPYVLLRPLNGNPMDAKTVMEMGIPNSISI.

One can recognise a PLAT domain in the interval 79-219 (MKATVSVHMK…CSPDKRTFFP (141 aa)). In terms of domain architecture, Lipoxygenase spans 223-932 (SYIPSQTPKG…EMGIPNSISI (710 aa)). Residues 270–284 (PESKRPVLGGKEHPY) are compositionally biased toward basic and acidic residues. The disordered stretch occupies residues 270–311 (PESKRPVLGGKEHPYPRRCRTGRPRSKTDPSSEEESHKKGEM). A compositionally biased stretch (basic residues) spans 285–294 (PRRCRTGRPR). A compositionally biased stretch (basic and acidic residues) spans 295 to 311 (SKTDPSSEEESHKKGEM). Positions 588, 593, 778, 782, and 932 each coordinate Fe cation.

The protein belongs to the lipoxygenase family. It depends on Fe cation as a cofactor.

It localises to the plastid. It is found in the chloroplast. It catalyses the reaction (9Z,12Z)-octadecadienoate + O2 = (13S)-hydroperoxy-(9Z,11E)-octadecadienoate. The catalysed reaction is (9Z,12Z,15Z)-octadecatrienoate + O2 = (13S)-hydroperoxy-(9Z,11E,15Z)-octadecatrienoate. The protein operates within lipid metabolism; oxylipin biosynthesis. Functionally, plant lipoxygenase may be involved in a number of diverse aspects of plant physiology including growth and development, pest resistance, and senescence or responses to wounding. This enzyme exhibits linoleate 13-lipoxygenase activity. The protein is Lipoxygenase 2.2, chloroplastic (LOX2.2) of Hordeum vulgare (Barley).